A 162-amino-acid polypeptide reads, in one-letter code: ATP-dependent Clp protease adapter protein CLPS1, chloroplastic (162 aa).

The transit peptide at 1–58 directs the protein to the chloroplast; the sequence is MAASCLRPAPTASAQMMTRSPVAGLPRPCSALQRSGCTLQGAFGTFAPQTTRTFVVTW.

Belongs to the ClpS family.

The protein localises to the plastid. Its subcellular location is the chloroplast stroma. Its function is as follows. Small adapter protein that modulate the activity of plastid Clp protease system (CLPC). Probably involved in substrate selection for plastid CLPC. This Chlamydomonas reinhardtii (Chlamydomonas smithii) protein is ATP-dependent Clp protease adapter protein CLPS1, chloroplastic.